The sequence spans 419 residues: Phospho-N-acetylmuramoyl-pentapeptide-transferase (419 aa).

10 helical membrane passes run 22-42 (YVSF…TAIG), 72-92 (TPTM…LLCA), 94-114 (LNNI…ALGF), 135-155 (IVGQ…SPDV), 210-230 (AAWL…SNGA), 238-258 (GLAA…AYMS), 266-286 (FLNI…AAFI), 303-323 (FMGD…AIII), 327-347 (LLIP…MLQV), and 396-416 (KIVV…IVTL).

The protein belongs to the glycosyltransferase 4 family. MraY subfamily. Requires Mg(2+) as cofactor.

It localises to the cell inner membrane. It catalyses the reaction UDP-N-acetyl-alpha-D-muramoyl-L-alanyl-gamma-D-glutamyl-meso-2,6-diaminopimeloyl-D-alanyl-D-alanine + di-trans,octa-cis-undecaprenyl phosphate = di-trans,octa-cis-undecaprenyl diphospho-N-acetyl-alpha-D-muramoyl-L-alanyl-D-glutamyl-meso-2,6-diaminopimeloyl-D-alanyl-D-alanine + UMP. It participates in cell wall biogenesis; peptidoglycan biosynthesis. In terms of biological role, catalyzes the initial step of the lipid cycle reactions in the biosynthesis of the cell wall peptidoglycan: transfers peptidoglycan precursor phospho-MurNAc-pentapeptide from UDP-MurNAc-pentapeptide onto the lipid carrier undecaprenyl phosphate, yielding undecaprenyl-pyrophosphoryl-MurNAc-pentapeptide, known as lipid I. The polypeptide is Phospho-N-acetylmuramoyl-pentapeptide-transferase (Parabacteroides distasonis (strain ATCC 8503 / DSM 20701 / CIP 104284 / JCM 5825 / NCTC 11152)).